We begin with the raw amino-acid sequence, 274 residues long: RsbT co-antagonist protein RsbRA (274 aa).

Positions 150–265 constitute an STAS domain; the sequence is SAPLIPVFEN…KGIQTALEMT (116 aa). Residues Thr-171 and Thr-205 each carry the phosphothreonine modification.

As to quaternary structure, interacts with RsbRB and RsbS in the stressosome. The stressosome probably also contains RsbRC and RsbRD. In terms of processing, phosphorylated by RsbT. This threonine phosphorylation abrogates the ability of RsbRA to stimulate RsbT in vitro.

Its function is as follows. Acts as a positive regulator of sigma-B activity in response to salt and heat stress by stimulating the activity of the RsbT kinase toward RsbS in vitro. One of 4 functionally non-identical RsbR paralogs, it functions in the environmental signaling branch of the general stress response. In terms of biological role, negative regulator of sigma-B activity. Non-phosphorylated RsbS binds to RsbT, preventing its association with RsbU. Requires any one of RsbRA, RsbRB, RsbRC or RsbRD to sequester RsbT. When RsbS and the RsbR paralog(s) are phosphorylated, they release RsbT, which can then bind and activate RsbU. In Bacillus subtilis (strain 168), this protein is RsbT co-antagonist protein RsbRA (rsbRA).